Here is a 116-residue protein sequence, read N- to C-terminus: MVGGEAAAAVEELVSGVRQAADFAEQFRSYSESEKQWKARMEFILRHLPDYRDPPDGSGRLDQLLSLSMVWANHLFLGCSYNKDLLDKVMEMADGIEVEDLPQFTTRSELMKKHQS.

An N-acetylmethionine modification is found at M1. Residues 24–116 (AEQFRSYSES…RSELMKKHQS (93 aa)) form the XRN2-binding (XTBD) domain.

It belongs to the CARF family. Interacts with XRN2; the interaction is direct.

In Homo sapiens (Human), this protein is CDKN2AIP N-terminal-like protein (CDKN2AIPNL).